The chain runs to 425 residues: Alpha-(1,3)-fucosyltransferase C (425 aa).

The Cytoplasmic portion of the chain corresponds to 1-37 (MYLGRVHCSFEVPGLLSGRVGHMSMAVRSVRLACGPR). A helical; Signal-anchor for type II membrane protein membrane pass occupies residues 38–58 (GALLLLLLVLLGVLVVLHKVT). Topologically, residues 59–425 (QSPLLNQNKI…SCRLQSRIRL (367 aa)) are lumenal. Residues Asn187 and Asn230 are each glycosylated (N-linked (GlcNAc...) asparagine).

This sequence belongs to the glycosyltransferase 10 family.

It localises to the golgi apparatus. It is found in the golgi stack membrane. It participates in protein modification; protein glycosylation. This is Alpha-(1,3)-fucosyltransferase C (FucTC) from Drosophila melanogaster (Fruit fly).